The chain runs to 326 residues: tRNA U34 carboxymethyltransferase (326 aa).

Carboxy-S-adenosyl-L-methionine is bound by residues K91, W105, K110, G130, M196, Y200, and R315.

This sequence belongs to the class I-like SAM-binding methyltransferase superfamily. CmoB family. In terms of assembly, homotetramer.

The enzyme catalyses carboxy-S-adenosyl-L-methionine + 5-hydroxyuridine(34) in tRNA = 5-carboxymethoxyuridine(34) in tRNA + S-adenosyl-L-homocysteine + H(+). Catalyzes carboxymethyl transfer from carboxy-S-adenosyl-L-methionine (Cx-SAM) to 5-hydroxyuridine (ho5U) to form 5-carboxymethoxyuridine (cmo5U) at position 34 in tRNAs. In Tolumonas auensis (strain DSM 9187 / NBRC 110442 / TA 4), this protein is tRNA U34 carboxymethyltransferase.